We begin with the raw amino-acid sequence, 637 residues long: Capsid scaffolding protein (637 aa).

Catalysis depends on charge relay system residues H61, S129, and H148. 3 disordered regions span residues 262–326 (PERG…PGDG), 414–479 (LPAA…PHET), and 502–608 (HAPY…EAGA). The span at 277 to 317 (SPAASVPAPQVAVRARQVASSSSSSSFPAPADMNPVSASGA) shows a compositional bias: low complexity. Residues 326 to 345 (GSYLWIPASHYNQLVTGQSA) are interaction with pAP. The Nuclear localization signal signature appears at 428-431 (KRRR). 2 stretches are compositionally biased toward basic and acidic residues: residues 432–450 (HEVE…DRDF) and 457–468 (ARPEPRPVDSRR). Pro residues-rich tracts occupy residues 537-559 (LPPP…PSYP) and 566-594 (GPAP…PPAA). Residues 595–608 (SLPQPEAPGAEAGA) are compositionally biased toward low complexity. The tract at residues 617–637 (HVNVDTARAADLFVSQMMGSR) is interaction with major capsid protein.

Belongs to the herpesviridae capsid scaffolding protein family. Homomultimer. Interacts with major capsid protein. As to quaternary structure, exists in a monomer-dimer equilibrium with the dimer being the active species. In terms of processing, capsid scaffolding protein is cleaved by assemblin after formation of the spherical procapsid. As a result, the capsid obtains its mature, icosahedral shape. Cleavages occur at two or more sites: release (R-site) and maturation (M-site).

The protein localises to the host cytoplasm. It is found in the host nucleus. It catalyses the reaction Cleaves -Ala-|-Ser- and -Ala-|-Ala- bonds in the scaffold protein.. Functionally, acts as a scaffold protein by binding major capsid protein in the cytoplasm, inducing the nuclear localization of both proteins. Multimerizes in the nucleus such as major capsid protein forms the icosahedral T=16 capsid. Autocatalytic cleavage releases the assembly protein, and subsequently abolishes interaction with major capsid protein. Cleavages products are evicted from the capsid before or during DNA packaging. Its function is as follows. Protease that plays an essential role in virion assembly within the nucleus. Catalyzes the cleavage of the assembly protein after formation of the spherical procapsid. By that cleavage, the capsid matures and gains its icosahedral shape. The cleavage sites seem to include -Ala-Ser-, -Ala-Ala-, as well as Ala-Thr bonds. Assemblin and cleavages products are evicted from the capsid before or during DNA packaging. Plays a major role in capsid assembly. Acts as a scaffold protein by binding major capsid protein. Multimerizes in the nucleus such as major capsid protein forms the icosahedral T=16 capsid. Cleaved by assemblin after capsid completion. The cleavages products are evicted from the capsid before or during DNA packaging. The protein is Capsid scaffolding protein (UL26) of Homo sapiens (Human).